The following is a 643-amino-acid chain: SURP and G-patch domain-containing protein 1 (643 aa).

Disordered regions lie at residues 48 to 69 (ARME…HPGE) and 97 to 119 (KAQT…SSLK). Threonine 128 is modified (phosphothreonine). The stretch at 187–229 (VIEKLARFVAEGGPELEKVAMEDYKDNPAFTFLHDKNSREFLY) is one SURP motif 1 repeat. Serine 252 is subject to Phosphoserine. An SURP motif 2 repeat occupies 262 to 305 (LAEKLARFIADGGPEVETIALQNNRENQAFSFLYDPNSQGYRYY). 2 disordered regions span residues 316–335 (KAGS…LRRK) and 360–393 (AVNP…DKVE). Residue serine 322 is modified to Phosphoserine. A Nuclear localization signal motif is present at residues 378–384 (KRKRKSR). Serine 407, serine 409, serine 412, and serine 483 each carry phosphoserine. Residues 560–607 (VENIGYQMLMKMGWKEGEGLGTEGQGIKNPVNKGATTIDGAGFGIDRP) enclose the G-patch domain.

As to quaternary structure, component of the spliceosome.

The protein resides in the nucleus. Plays a role in pre-mRNA splicing. The chain is SURP and G-patch domain-containing protein 1 (Sugp1) from Mus musculus (Mouse).